A 188-amino-acid chain; its full sequence is Elongation factor P (188 aa).

Lysine 34 is modified (N6-(3,6-diaminohexanoyl)-5-hydroxylysine).

It belongs to the elongation factor P family. May be beta-lysylated on the epsilon-amino group of Lys-34 by the combined action of EpmA and EpmB, and then hydroxylated on the C5 position of the same residue by EpmC (if this protein is present). Lysylation is critical for the stimulatory effect of EF-P on peptide-bond formation. The lysylation moiety may extend toward the peptidyltransferase center and stabilize the terminal 3-CCA end of the tRNA. Hydroxylation of the C5 position on Lys-34 may allow additional potential stabilizing hydrogen-bond interactions with the P-tRNA.

It localises to the cytoplasm. It functions in the pathway protein biosynthesis; polypeptide chain elongation. Functionally, involved in peptide bond synthesis. Alleviates ribosome stalling that occurs when 3 or more consecutive Pro residues or the sequence PPG is present in a protein, possibly by augmenting the peptidyl transferase activity of the ribosome. Modification of Lys-34 is required for alleviation. In Haemophilus influenzae (strain PittGG), this protein is Elongation factor P.